The sequence spans 416 residues: Enterobactin exporter EntS (416 aa).

Residues 1 to 21 are Cytoplasmic-facing; the sequence is MNKQSWLLNLSLLKTHPAFRA. Residues 22–42 form a helical membrane-spanning segment; it reads VFLARFISIVSLGLLGVAVPV. At 43–55 the chain is on the periplasmic side; it reads QIQMMTHSTWQVG. Residues 56–76 form a helical membrane-spanning segment; the sequence is LSVTLTGGAMFVGLMVGGVLA. Residues 77–83 are Cytoplasmic-facing; sequence DRYERKK. Residues 84-104 form a helical membrane-spanning segment; that stretch reads VILLARGTCGIGFIGLCLNAL. The Periplasmic segment spans residues 105 to 109; sequence LPEPS. A helical transmembrane segment spans residues 110–130; it reads LLAIYLLGLWDGFFASLGVTA. The Cytoplasmic portion of the chain corresponds to 131–156; that stretch reads LLAATPALVGRENLMQAGAITMLTVR. A helical transmembrane segment spans residues 157–177; that stretch reads LGSVISPMIGGLLLATGGVAW. Residue Asn-178 is a topological domain, periplasmic. The helical transmembrane segment at 179-199 threads the bilayer; that stretch reads YGLAAAGTFITLLPLLSLPAL. The Cytoplasmic segment spans residues 200 to 218; sequence PPPPQPREHPLKSLLAGFR. The chain crosses the membrane as a helical span at residues 219 to 239; it reads FLLASPLVGGIALLGGLLTMA. At 240–256 the chain is on the periplasmic side; sequence SAVRVLYPALADNWQMS. A helical membrane pass occupies residues 257-277; that stretch reads AAQIGFLYAAIPLGAAIGALT. Over 278–287 the chain is Cytoplasmic; that stretch reads SGKLAHSVRP. The helical transmembrane segment at 288 to 307 threads the bilayer; sequence GLLMLLSTLGAFLAIGLFGL. The Periplasmic segment spans residues 308–313; it reads MPMWIL. A helical membrane pass occupies residues 314 to 336; it reads GVVCLALFGWLSAVSSLLQYTML. At 337-356 the chain is on the cytoplasmic side; the sequence is QTQTPEAMLGRINGLWTAQN. The chain crosses the membrane as a helical span at residues 357–377; that stretch reads VTGDAIGAALLGGLGAMMTPV. Ala-378 is a topological domain (periplasmic). The helical transmembrane segment at 379–399 threads the bilayer; sequence SASASGFGLLIIGVLLLLVLV. Residues 400–416 lie on the Cytoplasmic side of the membrane; that stretch reads ELRRFRQTPPQVTASDS.

It belongs to the major facilitator superfamily. EntS (TC 2.A.1.38) family.

It localises to the cell inner membrane. In terms of biological role, component of an export pathway for enterobactin. This chain is Enterobactin exporter EntS, found in Escherichia coli O6:H1 (strain CFT073 / ATCC 700928 / UPEC).